Here is a 167-residue protein sequence, read N- to C-terminus: Large ribosomal subunit protein uL10 (167 aa).

It belongs to the universal ribosomal protein uL10 family. Part of the ribosomal stalk of the 50S ribosomal subunit. The N-terminus interacts with L11 and the large rRNA to form the base of the stalk. The C-terminus forms an elongated spine to which L12 dimers bind in a sequential fashion forming a multimeric L10(L12)X complex.

Its function is as follows. Forms part of the ribosomal stalk, playing a central role in the interaction of the ribosome with GTP-bound translation factors. This chain is Large ribosomal subunit protein uL10, found in Alkaliphilus oremlandii (strain OhILAs) (Clostridium oremlandii (strain OhILAs)).